A 405-amino-acid polypeptide reads, in one-letter code: Pleckstrin homology-like domain family A member 1 (405 aa).

Composition is skewed to basic and acidic residues over residues 1 to 11 (MRRTPAAERLS) and 54 to 63 (RSPEDGREQP). Disordered stretches follow at residues 1–67 (MRRT…AHGS), 189–217 (QLQQ…VASL), and 293–405 (QQHL…SNSA). The 125-residue stretch at 153 to 277 (ALKEGVLEKR…AEITLQMVQY (125 aa)) folds into the PH domain. Residues 189 to 202 (QLQQQQQQQQPGQG) show a composition bias toward low complexity. A compositionally biased stretch (polar residues) spans 204–213 (AEPSQPSGPT). The segment covering 294 to 309 (QHLVQQQPPQTQQIQP) has biased composition (low complexity). The segment at 309 to 344 (PQPQPQIQPQPQPQIQPQPQPQPQPQPQPQPQPQPQ) is 16 X 2 AA repeats of P-Q. The segment covering 310–342 (QPQPQIQPQPQPQIQPQPQPQPQPQPQPQPQPQ) has biased composition (pro residues). Positions 350 to 376 (PHPHPHPYSHPHQHPHPHPHPHPHPHP) are enriched in basic residues. An 11 X 2 AA repeats of P-H region spans residues 354–377 (PHPYSHPHQHPHPHPHPHPHPHPH). The span at 378 to 389 (PYQLQHAHQPLH) shows a compositional bias: low complexity.

In terms of assembly, interacts with RPL14, EIF3S7 and PABPC4. In terms of tissue distribution, widely expressed with very high levels in adult liver and high levels in adult lung. According to PubMed:10428057 expressed at low levels in liver. Expressed at increased levels in atherosclerotic lesions observed in hyperhomocysteinema.

It localises to the cytoplasm. Its subcellular location is the cytoplasmic vesicle. The protein resides in the nucleus. It is found in the nucleolus. Its function is as follows. Seems to be involved in regulation of apoptosis. May be involved in detachment-mediated programmed cell death. May mediate apoptosis during neuronal development. May be involved in regulation of anti-apoptotic effects of IGF1. Required for TCR-induced apoptosis and expression of TNFRSF6/FAS in a T-cell hybridoma cell line. May be involved in translational regulation. The polypeptide is Pleckstrin homology-like domain family A member 1 (Phlda1) (Mus musculus (Mouse)).